The primary structure comprises 142 residues: Large ribosomal subunit protein uL11 (142 aa).

It belongs to the universal ribosomal protein uL11 family. In terms of assembly, part of the ribosomal stalk of the 50S ribosomal subunit. Interacts with L10 and the large rRNA to form the base of the stalk. L10 forms an elongated spine to which L12 dimers bind in a sequential fashion forming a multimeric L10(L12)X complex. One or more lysine residues are methylated.

Its function is as follows. Forms part of the ribosomal stalk which helps the ribosome interact with GTP-bound translation factors. The chain is Large ribosomal subunit protein uL11 from Mannheimia succiniciproducens (strain KCTC 0769BP / MBEL55E).